A 312-amino-acid polypeptide reads, in one-letter code: Deoxyribonuclease Tat-D (312 aa).

A divalent metal cation contacts are provided by Glu124, His161, His187, and Asp235.

The protein belongs to the metallo-dependent hydrolases superfamily. TatD-type hydrolase family. Requires a divalent metal cation as cofactor.

Its subcellular location is the cytoplasm. It is found in the nucleus. In terms of biological role, has both endo- and exonuclease activities. Incises double-stranded DNA without obvious specificity via its endonuclease activity and excises the DNA from the 3'-to 5'-end by its exonuclease activity. May have a role in apoptosis. The chain is Deoxyribonuclease Tat-D from Schizosaccharomyces pombe (strain 972 / ATCC 24843) (Fission yeast).